Consider the following 329-residue polypeptide: Flotillin-like protein FloA (329 aa).

Helical transmembrane passes span 6–26 and 27–47; these read FIVIAVIIVVALLILFSFVPI and GLWISALAAGVHVGIGTLVGM.

Belongs to the flotillin-like FloA family. In terms of assembly, homooligomerizes.

It localises to the cell membrane. The protein localises to the membrane raft. Its function is as follows. Found in functional membrane microdomains (FMM) that may be equivalent to eukaryotic membrane rafts. FMMs are highly dynamic and increase in number as cells age. Flotillins are thought to be important factors in membrane fluidity. This Staphylococcus aureus (strain USA300) protein is Flotillin-like protein FloA.